The primary structure comprises 81 residues: Cytotoxin 5b (81 aa).

The first 21 residues, 1 to 21 (MKTLLLTLLVVTIVCLDLGYT), serve as a signal peptide directing secretion. Disulfide bonds link C24–C42, C35–C59, C63–C74, and C75–C80.

The protein belongs to the three-finger toxin family. Short-chain subfamily. Type IA cytotoxin sub-subfamily. As to quaternary structure, monomer in solution; Homodimer and oligomer in the presence of negatively charged lipids forming a pore with a size ranging between 20 and 30 Angstroms. Expressed by the venom gland.

The protein localises to the secreted. The protein resides in the target cell membrane. Shows cytolytic activity on many different cells by forming pore in lipid membranes. In vivo, increases heart rate or kills the animal by cardiac arrest. In addition, it binds to heparin with high affinity, interacts with Kv channel-interacting protein 1 (KCNIP1) in a calcium-independent manner, and binds to integrin alpha-V/beta-3 (ITGAV/ITGB3) with moderate affinity. This Naja sputatrix (Malayan spitting cobra) protein is Cytotoxin 5b.